Here is a 238-residue protein sequence, read N- to C-terminus: MGKRLMSQNRGKGSPTYRATSSRFKADLEHIKTFGDETIEGIITEVVHDPARNCPIIRVKFGNGEERLILAPEGVGVGDKIACGISAEIKPGNTLPLSEIPEGCAICNIESQPGDGGAFARSSGVYAIIVAHEGKKTVVQMPSGEIKRLNPKCRATIGVVAGGGRTEKPFVRAGNKWYKMANKATKWPVVRGVAMNAVDHPFGGGGRQHPGRPKTVSRNTPPGRKVGSIAARRTGVGH.

The disordered stretch occupies residues 201–238; that stretch reads PFGGGGRQHPGRPKTVSRNTPPGRKVGSIAARRTGVGH.

Belongs to the universal ribosomal protein uL2 family. As to quaternary structure, part of the 50S ribosomal subunit. Forms a bridge to the 30S subunit in the 70S ribosome.

In terms of biological role, one of the primary rRNA binding proteins. Required for association of the 30S and 50S subunits to form the 70S ribosome, for tRNA binding and peptide bond formation. It has been suggested to have peptidyltransferase activity; this is somewhat controversial. Makes several contacts with the 16S rRNA in the 70S ribosome. The sequence is that of Large ribosomal subunit protein uL2 from Methanocella arvoryzae (strain DSM 22066 / NBRC 105507 / MRE50).